The following is a 329-amino-acid chain: Phosphate acyltransferase (329 aa).

It belongs to the PlsX family. In terms of assembly, homodimer. Probably interacts with PlsY.

Its subcellular location is the cytoplasm. The enzyme catalyses a fatty acyl-[ACP] + phosphate = an acyl phosphate + holo-[ACP]. The protein operates within lipid metabolism; phospholipid metabolism. Functionally, catalyzes the reversible formation of acyl-phosphate (acyl-PO(4)) from acyl-[acyl-carrier-protein] (acyl-ACP). This enzyme utilizes acyl-ACP as fatty acyl donor, but not acyl-CoA. This chain is Phosphate acyltransferase, found in Shouchella clausii (strain KSM-K16) (Alkalihalobacillus clausii).